Reading from the N-terminus, the 764-residue chain is 5-methyltetrahydropteroyltriglutamate--homocysteine methyltransferase (764 aa).

Residues 16 to 19 (RELK) and Lys-121 each bind 5-methyltetrahydropteroyltri-L-glutamate. Residues 440–442 (IGS) and Glu-493 each bind L-homocysteine. Residues 440–442 (IGS) and Glu-493 contribute to the L-methionine site. Residues 524–525 (RC) and Trp-570 contribute to the 5-methyltetrahydropteroyltri-L-glutamate site. Asp-608 contributes to the L-homocysteine binding site. Asp-608 provides a ligand contact to L-methionine. Glu-614 contributes to the 5-methyltetrahydropteroyltri-L-glutamate binding site. Residues His-650, Cys-652, and Glu-674 each contribute to the Zn(2+) site. The active-site Proton donor is His-703. A Zn(2+)-binding site is contributed by Cys-735.

It belongs to the vitamin-B12 independent methionine synthase family. Zn(2+) is required as a cofactor.

The enzyme catalyses 5-methyltetrahydropteroyltri-L-glutamate + L-homocysteine = tetrahydropteroyltri-L-glutamate + L-methionine. Its pathway is amino-acid biosynthesis; L-methionine biosynthesis via de novo pathway; L-methionine from L-homocysteine (MetE route): step 1/1. Its function is as follows. Catalyzes the transfer of a methyl group from 5-methyltetrahydrofolate to homocysteine resulting in methionine formation. The protein is 5-methyltetrahydropteroyltriglutamate--homocysteine methyltransferase of Burkholderia cenocepacia (strain ATCC BAA-245 / DSM 16553 / LMG 16656 / NCTC 13227 / J2315 / CF5610) (Burkholderia cepacia (strain J2315)).